We begin with the raw amino-acid sequence, 403 residues long: Putative glutamate--cysteine ligase 2 (403 aa).

The interval 370 to 403 (ESAAQRRAPQAARRRIRASSEPLGPMSMWPERLH) is disordered.

It belongs to the glutamate--cysteine ligase type 2 family. YbdK subfamily.

It catalyses the reaction L-cysteine + L-glutamate + ATP = gamma-L-glutamyl-L-cysteine + ADP + phosphate + H(+). In terms of biological role, ATP-dependent carboxylate-amine ligase which exhibits weak glutamate--cysteine ligase activity. This Bordetella avium (strain 197N) protein is Putative glutamate--cysteine ligase 2.